A 345-amino-acid chain; its full sequence is Membrane progestin receptor alpha (345 aa).

At 1 to 74 the chain is on the cytoplasmic side; it reads MAMAVAQKFN…FQRHNEAVNV (74 aa). A helical membrane pass occupies residues 75–95; that stretch reads WTHLLAALALLLRLIGLAASV. Residues 96–102 lie on the Extracellular side of the membrane; the sequence is DFREDPH. Residues 103–123 traverse the membrane as a helical segment; that stretch reads ALPLFFIVLASFTYLSFSAVA. The Cytoplasmic portion of the chain corresponds to 124–136; it reads HLLQAKSEFWHYS. Residues 137–157 traverse the membrane as a helical segment; sequence FFFLDYVGVAVYQFGSALAHF. Topologically, residues 158-168 are extracellular; sequence YYAIEPSWHDK. The chain crosses the membrane as a helical span at residues 169 to 189; that stretch reads VQAIFLPTAAFLAWLSCAGSC. At 190–243 the chain is on the cytoplasmic side; sequence YNKYSQKPGLLGRIFQEAPSALAYVLDISPVLHRIIVSPLPAEEDPALLYHKCQ. A helical membrane pass occupies residues 244 to 264; it reads VVFFLLAAAFFSTVMPESWFP. Over 265-268 the chain is Extracellular; it reads GSCH. Residues 269-289 form a helical membrane-spanning segment; sequence IFGQGHQVFHVFLVLCTLAQL. The Cytoplasmic segment spans residues 290–315; sequence EAVTLDYQARRGIYEPLHARWPHNFS. A helical membrane pass occupies residues 316-336; it reads GLFLLTVASSSLTALLLSQLV. Topologically, residues 337–345 are extracellular; that stretch reads RRKLHQKTK.

It belongs to the ADIPOR family. In terms of tissue distribution, detected in most adult tissues. Higher expression found in white fat and liver than brown fat and skeletal muscle.

It is found in the cell membrane. In terms of biological role, plasma membrane progesterone (P4) receptor coupled to G proteins. Seems to act through a G(i) mediated pathway. May be involved in oocyte maturation. Involved in neurosteroid inhibition of apoptosis. Also binds dehydroepiandrosterone (DHEA), pregnanolone, pregnenolone and allopregnanolone. This is Membrane progestin receptor alpha from Mus musculus (Mouse).